A 471-amino-acid polypeptide reads, in one-letter code: P2X purinoceptor 2 (471 aa).

The Cytoplasmic segment spans residues M1–G42. 6 disulfide bridges follow: C21–C439, C125–C176, C136–C159, C142–C170, C226–C236, and C270–C279. Residues V43–V63 form a helical membrane-spanning segment. Over Q64–S337 the chain is Extracellular. The ATP site is built by K81 and K83. N133 carries an N-linked (GlcNAc...) asparagine glycan. A glycan (N-linked (GlcNAc...) asparagine) is linked at N194. T196 is a binding site for ATP. ATP-binding residues include S296, N300, and R302. The N-linked (GlcNAc...) asparagine glycan is linked to N310. ATP is bound at residue K319. The interval A320–A333 is pore-forming motif. A helical transmembrane segment spans residues L338–L358. The Cytoplasmic segment spans residues C359–L471. The interval G400–L471 is disordered.

Belongs to the P2X receptor family. In terms of assembly, homotrimer and heterotrimer; functional P2XRs are organized as homomeric and heteromeric trimers. Homotrimer. Forms heterotrimer with P2RX1. Forms heterotrimer with P2RX6. Forms heterotrimer with P2RX3. Expressed in both the central and peripheral nervous system, as well as in the pituitary gland.

Its subcellular location is the cell membrane. It carries out the reaction Ca(2+)(in) = Ca(2+)(out). The enzyme catalyses K(+)(in) = K(+)(out). It catalyses the reaction Na(+)(in) = Na(+)(out). Fast activation by external ATP. Exhibits slow desensitization during prolonged ATP activation. Not sensitive to the ATP agonist:alpha/beta-methylene-ATP. Its function is as follows. ATP-gated nonselective transmembrane cation channel permeable to potassium, sodium and calcium. Activation by extracellular ATP induces a variety of cellular responses, such as excitatory postsynaptic responses in sensory neurons, neuromuscular junctions (NMJ) formation, hearing, perception of taste and peristalsis. In the inner ear, regulates sound transduction and auditory neurotransmission, outer hair cell electromotility, inner ear gap junctions, and K(+) recycling. Mediates synaptic transmission between neurons and from neurons to smooth muscle. This is P2X purinoceptor 2 from Homo sapiens (Human).